We begin with the raw amino-acid sequence, 158 residues long: 6,7-dimethyl-8-ribityllumazine synthase (158 aa).

5-amino-6-(D-ribitylamino)uracil is bound by residues phenylalanine 22, 57 to 59 (AVE), and 81 to 83 (AVI). 86–87 (GT) contacts (2S)-2-hydroxy-3-oxobutyl phosphate. Histidine 89 (proton donor) is an active-site residue. Phenylalanine 114 is a 5-amino-6-(D-ribitylamino)uracil binding site. Arginine 128 contacts (2S)-2-hydroxy-3-oxobutyl phosphate.

It belongs to the DMRL synthase family. As to quaternary structure, forms an icosahedral capsid composed of 60 subunits, arranged as a dodecamer of pentamers.

The enzyme catalyses (2S)-2-hydroxy-3-oxobutyl phosphate + 5-amino-6-(D-ribitylamino)uracil = 6,7-dimethyl-8-(1-D-ribityl)lumazine + phosphate + 2 H2O + H(+). It participates in cofactor biosynthesis; riboflavin biosynthesis; riboflavin from 2-hydroxy-3-oxobutyl phosphate and 5-amino-6-(D-ribitylamino)uracil: step 1/2. Catalyzes the formation of 6,7-dimethyl-8-ribityllumazine by condensation of 5-amino-6-(D-ribitylamino)uracil with 3,4-dihydroxy-2-butanone 4-phosphate. This is the penultimate step in the biosynthesis of riboflavin. The polypeptide is 6,7-dimethyl-8-ribityllumazine synthase (Shewanella putrefaciens (strain CN-32 / ATCC BAA-453)).